Consider the following 463-residue polypeptide: Cis-zeatin O-glucosyltransferase 2 (463 aa).

His21 acts as the Proton acceptor in catalysis. 2 residues coordinate an anthocyanidin: His21 and Asn91. Asp127 serves as the catalytic Charge relay. Residues Ala339, Gln341, His356, Trp359, Asn360, Ser361, Glu364, Asp380, and Gln381 each contribute to the UDP-alpha-D-glucose site.

It belongs to the UDP-glycosyltransferase family. In terms of tissue distribution, highly expressed in root. Expressed at much lower level in kernel. Weakly or not expressed in expressed in stems and leaves.

It catalyses the reaction cis-zeatin + UDP-alpha-D-glucose = O-beta-D-glucosyl-cis-zeatin + UDP + H(+). Its function is as follows. Utilizes UDP-glucose as the sugar donor and catalyzes the formation of O-beta-D-glucosyl-cis-zeatin from cis-zeatin. May regulate active versus storage forms of cytokinins and could have an impact on seed growth. The polypeptide is Cis-zeatin O-glucosyltransferase 2 (Zea mays (Maize)).